A 311-amino-acid polypeptide reads, in one-letter code: 2-methoxy-6-polyprenyl-1,4-benzoquinol methylase, mitochondrial (311 aa).

The transit peptide at 1–29 (MAAGLCPGRALLSRRGGALWALLGTARGR) directs the protein to the mitochondrion. S-adenosyl-L-methionine contacts are provided by residues Thr-100, Asp-155, and 183-184 (NA).

It belongs to the class I-like SAM-binding methyltransferase superfamily. MenG/UbiE family. In terms of assembly, component of a multi-subunit COQ enzyme complex, composed of at least COQ3, COQ4, COQ5, COQ6, COQ7 and COQ9.

The protein resides in the mitochondrion inner membrane. It carries out the reaction a 2-methoxy-6-(all-trans-polyprenyl)benzene-1,4-diol + S-adenosyl-L-methionine = a 5-methoxy-2-methyl-3-(all-trans-polyprenyl)benzene-1,4-diol + S-adenosyl-L-homocysteine + H(+). The protein operates within cofactor biosynthesis; ubiquinone biosynthesis. In terms of biological role, methyltransferase required for the conversion of 2-polyprenyl-6-methoxy-1,4-benzoquinol (DDMQH2) to 2-polyprenyl-3-methyl-6-methoxy-1,4-benzoquinol (DMQH2). In Gallus gallus (Chicken), this protein is 2-methoxy-6-polyprenyl-1,4-benzoquinol methylase, mitochondrial.